The primary structure comprises 456 residues: tRNA-2-methylthio-N(6)-dimethylallyladenosine synthase (456 aa).

In terms of domain architecture, MTTase N-terminal spans 19–137; the sequence is KHFFIETWGC…FPEYLHRVQV (119 aa). [4Fe-4S] cluster contacts are provided by Cys28, Cys64, Cys98, Cys174, Cys178, and Cys181. One can recognise a Radical SAM core domain in the interval 160-392; the sequence is RKSNVKAFVT…AVNEGIVVGN (233 aa). Residues 393–456 enclose the TRAM domain; sequence KAAEGKIYEV…SFSLVGEVVE (64 aa).

It belongs to the methylthiotransferase family. MiaB subfamily. Monomer. [4Fe-4S] cluster is required as a cofactor.

It is found in the cytoplasm. It carries out the reaction N(6)-dimethylallyladenosine(37) in tRNA + (sulfur carrier)-SH + AH2 + 2 S-adenosyl-L-methionine = 2-methylsulfanyl-N(6)-dimethylallyladenosine(37) in tRNA + (sulfur carrier)-H + 5'-deoxyadenosine + L-methionine + A + S-adenosyl-L-homocysteine + 2 H(+). Catalyzes the methylthiolation of N6-(dimethylallyl)adenosine (i(6)A), leading to the formation of 2-methylthio-N6-(dimethylallyl)adenosine (ms(2)i(6)A) at position 37 in tRNAs that read codons beginning with uridine. The sequence is that of tRNA-2-methylthio-N(6)-dimethylallyladenosine synthase from Clostridium botulinum (strain Eklund 17B / Type B).